Reading from the N-terminus, the 937-residue chain is FNIP repeat-containing protein DDB_G0271996 (937 aa).

The span at 1-12 (MQQPISIQQPVV) shows a compositional bias: polar residues. Positions 1-60 (MQQPISIQQPVVNNINNSPNNQANINNNTTNNTNNNNNNNNTTNNIANNNNSNNINNNNE) are disordered. Positions 13–60 (NNINNSPNNQANINNNTTNNTNNNNNNNNTTNNIANNNNSNNINNNNE) are enriched in low complexity. FNIP repeat units follow at residues 307–350 (FNQP…LGQR), 354–394 (PIPI…TLDN), 396–439 (FNQP…FHQN), and 598–640 (YNHQ…RVKS). The stretch at 677 to 769 (VEQQAQYAQQ…EEEDTNNHQH (93 aa)) forms a coiled coil. The span at 719-729 (KQQQQQQQDNE) shows a compositional bias: low complexity. 3 disordered regions span residues 719-767 (KQQQ…TNNH), 794-823 (SNNSNNYNYNNNSNNNNNNNSNEEDDEEED), and 910-937 (QNQNNNNYNNNNNNNNNNNNNKKKNVKK). The segment covering 751–763 (LEEEQENEEEEED) has biased composition (acidic residues). Composition is skewed to low complexity over residues 794–814 (SNNSNNYNYNNNSNNNNNNNS) and 910–929 (QNQNNNNYNNNNNNNNNNNN). Positions 902–937 (ICNNINQNQNQNNNNYNNNNNNNNNNNNNKKKNVKK) form a coiled coil.

The protein is FNIP repeat-containing protein DDB_G0271996 of Dictyostelium discoideum (Social amoeba).